The sequence spans 93 residues: Corticostatin 1 (93 aa).

A signal peptide spans 1-19; sequence MRTLILLAAILLAALQAQA. A propeptide spanning residues 20-59 is cleaved from the precursor; the sequence is ELFSVNVDEVLDQQQPGSDQDLVIHLTGEESSALQVPDTK. 3 disulfide bridges follow: Cys62–Cys90, Cys64–Cys79, and Cys69–Cys89.

Belongs to the alpha-defensin family.

The protein resides in the secreted. Functionally, microbicidal activity and inhibits corticotropin (ACTH) stimulated corticosterone production. In Oryctolagus cuniculus (Rabbit), this protein is Corticostatin 1.